Reading from the N-terminus, the 431-residue chain is Serine hydroxymethyltransferase 2 (431 aa).

Residues leucine 131 and 135-137 (GHL) each bind (6S)-5,6,7,8-tetrahydrofolate. Residue lysine 240 is modified to N6-(pyridoxal phosphate)lysine.

It belongs to the SHMT family. In terms of assembly, homodimer. The cofactor is pyridoxal 5'-phosphate.

The protein resides in the cytoplasm. The catalysed reaction is (6R)-5,10-methylene-5,6,7,8-tetrahydrofolate + glycine + H2O = (6S)-5,6,7,8-tetrahydrofolate + L-serine. Its pathway is one-carbon metabolism; tetrahydrofolate interconversion. It participates in amino-acid biosynthesis; glycine biosynthesis; glycine from L-serine: step 1/1. Its function is as follows. Catalyzes the reversible interconversion of serine and glycine with tetrahydrofolate (THF) serving as the one-carbon carrier. This reaction serves as the major source of one-carbon groups required for the biosynthesis of purines, thymidylate, methionine, and other important biomolecules. Also exhibits THF-independent aldolase activity toward beta-hydroxyamino acids, producing glycine and aldehydes, via a retro-aldol mechanism. This is Serine hydroxymethyltransferase 2 from Vibrio parahaemolyticus serotype O3:K6 (strain RIMD 2210633).